Consider the following 118-residue polypeptide: uncharacterized protein (118 aa).

This sequence to S.pombe tam6.

The protein localises to the mitochondrion. This is an uncharacterized protein from Saccharomyces cerevisiae (strain ATCC 204508 / S288c) (Baker's yeast).